A 453-amino-acid polypeptide reads, in one-letter code: Bifunctional protein GlmU (453 aa).

Residues 1–231 (MERTCLAVIL…EIEMTGCNNR (231 aa)) form a pyrophosphorylase region. Residues 10-13 (LAAG), K24, Q77, 82-83 (GT), 105-107 (YGD), G143, E157, N172, and N229 each bind UDP-N-acetyl-alpha-D-glucosamine. Residue D107 coordinates Mg(2+). Residue N229 participates in Mg(2+) binding. The linker stretch occupies residues 232–252 (AELAVIERFWQERRRREMMLA). An N-acetyltransferase region spans residues 253–453 (GVTMIAPETV…AIKAAKKAEA (201 aa)). UDP-N-acetyl-alpha-D-glucosamine-binding residues include R318 and K336. The Proton acceptor role is filled by H348. The UDP-N-acetyl-alpha-D-glucosamine site is built by Y351 and N362. Residues A365, 371–372 (NY), S390, S408, and R425 each bind acetyl-CoA.

The protein in the N-terminal section; belongs to the N-acetylglucosamine-1-phosphate uridyltransferase family. It in the C-terminal section; belongs to the transferase hexapeptide repeat family. Homotrimer. Mg(2+) is required as a cofactor.

The protein resides in the cytoplasm. It carries out the reaction alpha-D-glucosamine 1-phosphate + acetyl-CoA = N-acetyl-alpha-D-glucosamine 1-phosphate + CoA + H(+). It catalyses the reaction N-acetyl-alpha-D-glucosamine 1-phosphate + UTP + H(+) = UDP-N-acetyl-alpha-D-glucosamine + diphosphate. It functions in the pathway nucleotide-sugar biosynthesis; UDP-N-acetyl-alpha-D-glucosamine biosynthesis; N-acetyl-alpha-D-glucosamine 1-phosphate from alpha-D-glucosamine 6-phosphate (route II): step 2/2. Its pathway is nucleotide-sugar biosynthesis; UDP-N-acetyl-alpha-D-glucosamine biosynthesis; UDP-N-acetyl-alpha-D-glucosamine from N-acetyl-alpha-D-glucosamine 1-phosphate: step 1/1. It participates in bacterial outer membrane biogenesis; LPS lipid A biosynthesis. Its function is as follows. Catalyzes the last two sequential reactions in the de novo biosynthetic pathway for UDP-N-acetylglucosamine (UDP-GlcNAc). The C-terminal domain catalyzes the transfer of acetyl group from acetyl coenzyme A to glucosamine-1-phosphate (GlcN-1-P) to produce N-acetylglucosamine-1-phosphate (GlcNAc-1-P), which is converted into UDP-GlcNAc by the transfer of uridine 5-monophosphate (from uridine 5-triphosphate), a reaction catalyzed by the N-terminal domain. This chain is Bifunctional protein GlmU, found in Rhizobium etli (strain ATCC 51251 / DSM 11541 / JCM 21823 / NBRC 15573 / CFN 42).